A 573-amino-acid polypeptide reads, in one-letter code: Protein FAM200A (573 aa).

The interval 1–51 (MTPESRDTTDLSPGGTQEMEGIVIVKVEEEDEEDHFQKERNKVESSPQVLS) is disordered. Residues 1–513 (MTPESRDTTD…DDFPLLSRKS (513 aa)) are Extracellular-facing. The helical transmembrane segment at 514-533 (ILLLLPFTTTYLCELGFSIL) threads the bilayer. Residues 534 to 573 (TRLKTKKRNRLNSAPDMRVALSSCVPDWKELMNRQAHPSH) lie on the Cytoplasmic side of the membrane.

The protein belongs to the FAM200 family.

It is found in the membrane. The chain is Protein FAM200A (FAM200A) from Homo sapiens (Human).